A 122-amino-acid chain; its full sequence is Fluoride-specific ion channel FluC (122 aa).

The next 4 helical transmembrane spans lie at 4–24 (ILLIGLGGFFGAILRYLVSGI), 36–56 (LIVNLLGSFIIGFLIYSSLFG), 65–85 (FIITGFCGALTTFSTFSYESF), and 100–120 (ILLNVFGCLGMVYLGRLASMF). Residues glycine 72 and threonine 75 each coordinate Na(+).

The protein belongs to the fluoride channel Fluc/FEX (TC 1.A.43) family.

Its subcellular location is the cell membrane. It carries out the reaction fluoride(in) = fluoride(out). Na(+) is not transported, but it plays an essential structural role and its presence is essential for fluoride channel function. Its function is as follows. Fluoride-specific ion channel. Important for reducing fluoride concentration in the cell, thus reducing its toxicity. This chain is Fluoride-specific ion channel FluC, found in Methanococcus maripaludis (strain DSM 14266 / JCM 13030 / NBRC 101832 / S2 / LL).